The following is a 249-amino-acid chain: Elongation factor Ts (249 aa).

Residues Thr-82–Val-85 form an involved in Mg(2+) ion dislocation from EF-Tu region. Residues Gln-215–Lys-249 are disordered. Low complexity predominate over residues Glu-222–Thr-236.

It belongs to the EF-Ts family.

It is found in the cytoplasm. Associates with the EF-Tu.GDP complex and induces the exchange of GDP to GTP. It remains bound to the aminoacyl-tRNA.EF-Tu.GTP complex up to the GTP hydrolysis stage on the ribosome. The protein is Elongation factor Ts of Rippkaea orientalis (strain PCC 8801 / RF-1) (Cyanothece sp. (strain PCC 8801)).